The following is a 407-amino-acid chain: Argininosuccinate synthase (407 aa).

Residues 12–20 (AFSGGLDTS) and A39 contribute to the ATP site. L-citrulline-binding residues include Y90 and S95. G120 is an ATP binding site. 3 residues coordinate L-aspartate: T122, N126, and D127. L-citrulline is bound at residue N126. L-citrulline is bound by residues R130, S181, S190, E266, and Y278.

The protein belongs to the argininosuccinate synthase family. Type 1 subfamily. Homotetramer.

The protein resides in the cytoplasm. It carries out the reaction L-citrulline + L-aspartate + ATP = 2-(N(omega)-L-arginino)succinate + AMP + diphosphate + H(+). Its pathway is amino-acid biosynthesis; L-arginine biosynthesis; L-arginine from L-ornithine and carbamoyl phosphate: step 2/3. In Nitrosospira multiformis (strain ATCC 25196 / NCIMB 11849 / C 71), this protein is Argininosuccinate synthase.